We begin with the raw amino-acid sequence, 215 residues long: Pyridoxine/pyridoxamine 5'-phosphate oxidase (215 aa).

Residues 9 to 12 and Lys-67 contribute to the substrate site; that span reads RKEY. Residues 62–67, 77–78, Lys-84, and Gln-106 contribute to the FMN site; these read RIVLLK and YT. Residues Tyr-124, Arg-128, and Ser-132 each coordinate substrate. Residues 141–142 and Trp-187 contribute to the FMN site; that span reads QS. 193–195 provides a ligand contact to substrate; the sequence is RLH. Arg-197 is an FMN binding site.

Belongs to the pyridoxamine 5'-phosphate oxidase family. In terms of assembly, homodimer. FMN is required as a cofactor.

It carries out the reaction pyridoxamine 5'-phosphate + O2 + H2O = pyridoxal 5'-phosphate + H2O2 + NH4(+). The catalysed reaction is pyridoxine 5'-phosphate + O2 = pyridoxal 5'-phosphate + H2O2. Its pathway is cofactor metabolism; pyridoxal 5'-phosphate salvage; pyridoxal 5'-phosphate from pyridoxamine 5'-phosphate: step 1/1. It participates in cofactor metabolism; pyridoxal 5'-phosphate salvage; pyridoxal 5'-phosphate from pyridoxine 5'-phosphate: step 1/1. Functionally, catalyzes the oxidation of either pyridoxine 5'-phosphate (PNP) or pyridoxamine 5'-phosphate (PMP) into pyridoxal 5'-phosphate (PLP). The protein is Pyridoxine/pyridoxamine 5'-phosphate oxidase of Cytophaga hutchinsonii (strain ATCC 33406 / DSM 1761 / CIP 103989 / NBRC 15051 / NCIMB 9469 / D465).